The primary structure comprises 363 residues: Probable protein phosphatase 2C member 13, mitochondrial (363 aa).

Residues 1-59 constitute a mitochondrion transit peptide; the sequence is MVCFASLRRALPLLLRATTTTTPRFLLPRALSGGVGGGAAVDARALLRGHSGWRGLRVA. Residues 111–357 form the PPM-type phosphatase domain; that stretch reads KCGYSSFRGK…DNITCIVVQF (247 aa). Mn(2+)-binding residues include D147, G148, D309, and D348.

The protein belongs to the PP2C family. Mg(2+) serves as cofactor. It depends on Mn(2+) as a cofactor. In terms of tissue distribution, highly expressed in mature pollen grains.

The protein resides in the mitochondrion. It carries out the reaction O-phospho-L-seryl-[protein] + H2O = L-seryl-[protein] + phosphate. The catalysed reaction is O-phospho-L-threonyl-[protein] + H2O = L-threonyl-[protein] + phosphate. Its function is as follows. Probable protein phosphatase that may play a role as a mitochondrial signal transduction mediator in pollen germination. May function in retrograde signaling from the mitochondria to the nucleus. May be a downstream factor of cytoplasmic male sterility (CMS). CMS is caused by genetic incompatibility between nuclei and mitochondria within male reproductive organs. The polypeptide is Probable protein phosphatase 2C member 13, mitochondrial (Oryza sativa subsp. japonica (Rice)).